Here is a 1401-residue protein sequence, read N- to C-terminus: Lysine-specific demethylase 6A (1401 aa).

The tract at residues 1 to 1095 (MKSCGVSLAT…TNIDLSDDKK (1095 aa)) is interaction with SUPT6H. TPR repeat units follow at residues 93 to 126 (SDFF…QSDY), 130 to 163 (AAFL…DPSF), 170 to 199 (HLRL…DCNP), 205 to 238 (AEIQ…ENLS), 250 to 283 (GWMH…DPNS), 284 to 317 (GQSW…SEAS), 318 to 351 (ADTW…DHGH), and 352 to 385 (AAAW…KSCS). The segment covering 437–449 (AMNTAQQNTSDNW) has biased composition (polar residues). Positions 437-457 (AMNTAQQNTSDNWSGGHAVSH) are disordered. Omega-N-methylarginine is present on arginine 519. The segment at 521–541 (TGIPNGPTADSSLPTNSVSGQ) is disordered. Arginine 549 is modified (omega-N-methylarginine). 2 stretches are compositionally biased toward polar residues: residues 624 to 652 (LTSS…SHSA) and 660 to 724 (LSST…SGNI). Disordered stretches follow at residues 624-746 (LTSS…SVEG), 758-778 (AVCS…SDNP), 810-864 (KTDN…ESQS), 914-940 (LLDK…NPPT), and 1043-1079 (FQES…KGPF). Serine 769 carries the phosphoserine modification. The span at 814–833 (SVASSPSSAISTATPSPKST) shows a compositional bias: low complexity. Phosphothreonine is present on threonine 827. Serine 829 is modified (phosphoserine). The segment covering 834-848 (EQTTTNSVTSLNSPH) has biased composition (polar residues). Over residues 918 to 931 (CPPPRPPSSPYPPL) the composition is skewed to pro residues. Basic and acidic residues predominate over residues 1046–1063 (SLREENEKRSHHKDHSDS). The JmjC domain occupies 1095 to 1258 (KWKLQLHELT…YKLAVERYEW (164 aa)). Fe cation contacts are provided by histidine 1146, glutamate 1148, and histidine 1226. The Zn(2+) site is built by cysteine 1331, cysteine 1334, cysteine 1358, and cysteine 1361.

Belongs to the UTX family. As to quaternary structure, interacts with TLE1. Component of the MLL2/3 complex (also named ASCOM complex), at least composed of KMT2D/MLL2 or KMT2C/MLL3, ASH2L, RBBP5, WDR5, NCOA6, DPY30, KDM6A (or KDM6B), PAXIP1/PTIP, PAGR1 and alpha- and beta-tubulin. Interacts with SUPT6H. Interacts with SMARCA4. Interacts with PROSER1. L-ascorbate serves as cofactor. Requires Fe(2+) as cofactor.

It is found in the nucleus. The enzyme catalyses N(6),N(6),N(6)-trimethyl-L-lysyl(27)-[histone H3] + 2 2-oxoglutarate + 2 O2 = N(6)-methyl-L-lysyl(27)-[histone H3] + 2 formaldehyde + 2 succinate + 2 CO2. Its function is as follows. Histone demethylase that specifically demethylates 'Lys-27' of histone H3, thereby playing a central role in histone code. Demethylates trimethylated and dimethylated but not monomethylated H3 'Lys-27'. Plays a central role in regulation of posterior development, by regulating HOX gene expression. Demethylation of 'Lys-27' of histone H3 is concomitant with methylation of 'Lys-4' of histone H3, and regulates the recruitment of the PRC1 complex and monoubiquitination of histone H2A. Plays a demethylase-independent role in chromatin remodeling to regulate T-box family member-dependent gene expression. The polypeptide is Lysine-specific demethylase 6A (KDM6A) (Homo sapiens (Human)).